The following is a 168-amino-acid chain: 3-isopropylmalate dehydratase small subunit 2 (168 aa).

The protein belongs to the LeuD family. LeuD type 2 subfamily. Heterodimer of LeuC and LeuD.

The catalysed reaction is (2R,3S)-3-isopropylmalate = (2S)-2-isopropylmalate. Its pathway is amino-acid biosynthesis; L-leucine biosynthesis; L-leucine from 3-methyl-2-oxobutanoate: step 2/4. Functionally, catalyzes the isomerization between 2-isopropylmalate and 3-isopropylmalate, via the formation of 2-isopropylmaleate. In Methanopyrus kandleri (strain AV19 / DSM 6324 / JCM 9639 / NBRC 100938), this protein is 3-isopropylmalate dehydratase small subunit 2 (leuD2).